We begin with the raw amino-acid sequence, 228 residues long: Urease accessory protein UreF (228 aa).

Belongs to the UreF family. As to quaternary structure, ureD, UreF and UreG form a complex that acts as a GTP-hydrolysis-dependent molecular chaperone, activating the urease apoprotein by helping to assemble the nickel containing metallocenter of UreC. The UreE protein probably delivers the nickel.

The protein resides in the cytoplasm. Its function is as follows. Required for maturation of urease via the functional incorporation of the urease nickel metallocenter. The sequence is that of Urease accessory protein UreF from Brucella ovis (strain ATCC 25840 / 63/290 / NCTC 10512).